Here is a 136-residue protein sequence, read N- to C-terminus: 5-hydroxyisourate hydrolase (136 aa).

Positions 1 to 20 are cleaved as a signal peptide; sequence MKRYILATAIASLVAAPAMA. Substrate-binding residues include histidine 31, arginine 69, and tyrosine 133.

The protein belongs to the transthyretin family. 5-hydroxyisourate hydrolase subfamily. In terms of assembly, homotetramer.

The protein resides in the periplasm. It carries out the reaction 5-hydroxyisourate + H2O = 5-hydroxy-2-oxo-4-ureido-2,5-dihydro-1H-imidazole-5-carboxylate + H(+). In terms of biological role, catalyzes the hydrolysis of 5-hydroxyisourate (HIU) to 2-oxo-4-hydroxy-4-carboxy-5-ureidoimidazoline (OHCU). This is 5-hydroxyisourate hydrolase (hiuH) from Salmonella typhi.